The chain runs to 319 residues: Pectinesterase (319 aa).

Q1 bears the Pyrrolidone carboxylic acid mark. T83 and Q113 together coordinate substrate. D136 (proton donor) is an active-site residue. C150 and C170 are disulfide-bonded. D157 serves as the catalytic Nucleophile. The substrate site is built by R225 and W227.

Belongs to the pectinesterase family.

The protein resides in the secreted. It is found in the cell wall. The enzyme catalyses [(1-&gt;4)-alpha-D-galacturonosyl methyl ester](n) + n H2O = [(1-&gt;4)-alpha-D-galacturonosyl](n) + n methanol + n H(+). Its pathway is glycan metabolism; pectin degradation; 2-dehydro-3-deoxy-D-gluconate from pectin: step 1/5. In terms of biological role, catalyzes the deesterification of methyl-esterified D-galactosiduronic acid units in pectic compounds. It participates in modulating cell wall during fruit ripening, cell wall extension during pollen germination, and in defense mechanisms against pathogens. This Daucus carota (Wild carrot) protein is Pectinesterase.